The primary structure comprises 97 residues: Essential MCU regulator, mitochondrial (97 aa).

Residues 1 to 35 (MIVPRLALPISLALQRVSRRVAEHPHNLRILQRHM) constitute a mitochondrion transit peptide. Residues 53-73 (PFGLLAIFCAVIPGLFVGATI) form a helical membrane-spanning segment.

Belongs to the SMDT1/EMRE family.

Its subcellular location is the mitochondrion inner membrane. In terms of biological role, essential regulatory subunit of the mitochondrial calcium uniporter MCU channel, a protein that mediates calcium uptake into mitochondria. The chain is Essential MCU regulator, mitochondrial from Drosophila melanogaster (Fruit fly).